Here is a 73-residue protein sequence, read N- to C-terminus: Putative membrane protein insertion efficiency factor (73 aa).

Belongs to the UPF0161 family.

Its subcellular location is the cell inner membrane. Could be involved in insertion of integral membrane proteins into the membrane. The chain is Putative membrane protein insertion efficiency factor from Rickettsia bellii (strain OSU 85-389).